The following is a 479-amino-acid chain: 6-phosphogluconate dehydrogenase, decarboxylating (479 aa).

NADP(+) contacts are provided by residues 9 to 14 (GLGVMG), 32 to 34 (NRT), 77 to 79 (VQA), and N105. Substrate is bound by residues N105 and 131–133 (SGG). K186 (proton acceptor) is an active-site residue. Residue 189 to 190 (HN) coordinates substrate. The active-site Proton donor is E193. Substrate is bound by residues Y194, K263, R290, R454, and H460.

This sequence belongs to the 6-phosphogluconate dehydrogenase family. As to quaternary structure, homodimer.

The catalysed reaction is 6-phospho-D-gluconate + NADP(+) = D-ribulose 5-phosphate + CO2 + NADPH. It participates in carbohydrate degradation; pentose phosphate pathway; D-ribulose 5-phosphate from D-glucose 6-phosphate (oxidative stage): step 3/3. In terms of biological role, catalyzes the oxidative decarboxylation of 6-phosphogluconate to ribulose 5-phosphate and CO(2), with concomitant reduction of NADP to NADPH. This chain is 6-phosphogluconate dehydrogenase, decarboxylating (GND), found in Trypanosoma brucei brucei.